Consider the following 393-residue polypeptide: MTAPLIYIVAGEHSGDVLGARLIHALRAINPSIRFAGIGGPRMEECGFQSLFPMHELAVMGLIEILPRVLKLRRRLQQTVQDIETRRPDLVLTIDSPGFCLRLLRAIQPFGIKRVHYVAPQVWAWREHRVKRFPGLWERMLCLLPFEEKWFAERNVPGQFVGHPVLESGADQGDAARFRARHSLADNARVIVLMPGSRANEAGRLLPVYGETLRLLMQNIPTITPVIPLASSTAHTVRGAVSSWPVQPIFITDIADKHDAFAAAEAALTKSGTSTLELAMGGVPMAVTYRVNRITAMMARRLIRVPYVAMVNLLAGREIVPELLQENCTPTKIAAVLTSLMNNAPDTNGMGAADSQKQALKAVVASLHAPNRHASDGLPSSAAAASIMEVLGQ.

Belongs to the LpxB family.

The catalysed reaction is a lipid X + a UDP-2-N,3-O-bis[(3R)-3-hydroxyacyl]-alpha-D-glucosamine = a lipid A disaccharide + UDP + H(+). It participates in bacterial outer membrane biogenesis; LPS lipid A biosynthesis. Condensation of UDP-2,3-diacylglucosamine and 2,3-diacylglucosamine-1-phosphate to form lipid A disaccharide, a precursor of lipid A, a phosphorylated glycolipid that anchors the lipopolysaccharide to the outer membrane of the cell. This is Lipid-A-disaccharide synthase from Granulibacter bethesdensis (strain ATCC BAA-1260 / CGDNIH1).